The primary structure comprises 94 residues: MARARGVVLGYRRGTNTQYPQHALVKLLLDDPRKAGLYVSGIAFYRDRYGNVYKGRVLRLHGRRGGVVVVKFNPPLPGQATGGVVEVVKAGGDG.

Belongs to the eukaryotic ribosomal protein eL33 family.

The protein is Large ribosomal subunit protein eL33 of Aeropyrum pernix (strain ATCC 700893 / DSM 11879 / JCM 9820 / NBRC 100138 / K1).